The following is an 845-amino-acid chain: Extended synaptotagmin-2 (845 aa).

The span at 1-17 (MSSAGGEGPEAGPGRAG) shows a compositional bias: gly residues. Residues 1-26 (MSSAGGEGPEAGPGRAGGRSEPEAPG) form a disordered region. At 1 to 27 (MSSAGGEGPEAGPGRAGGRSEPEAPGS) the chain is on the cytoplasmic side. The helical transmembrane segment at 28–48 (ALSVDLPGLLGQLARSFALLL) threads the bilayer. The Lumenal segment spans residues 49–51 (PVY). The chain crosses the membrane as a helical span at residues 52 to 72 (ALGYLGLSFSWVLLALGLLAW). Residues 73–845 (CRRSRGLKAS…EDGTRPQVIT (773 aa)) are Cytoplasmic-facing. One can recognise an SMP-LTD domain in the interval 115–294 (DTERAEWLNK…LPNRITVPLV (180 aa)). 2 C2 domains span residues 293–413 (LVSE…DEWF) and 442–563 (VLAD…QLSN). Ca(2+)-binding residues include Lys-324, Asp-325, Asp-337, Asp-384, Glu-385, Asp-386, Asp-388, Asp-390, and Asp-391. The interval 584–664 (QERPPDYQHS…RDLGRSSSSL (81 aa)) is disordered. The span at 612 to 628 (SQMSASPGTGGANTAPS) shows a compositional bias: polar residues. Residues Ser-615 and Ser-617 each carry the phosphoserine modification. Thr-629 carries the phosphothreonine modification. Positions 634–645 (VDDKPAMEEKPQ) are enriched in basic and acidic residues. Phosphoserine occurs at positions 660, 662, 663, 667, 679, 682, and 685. The C2 3 domain maps to 710–832 (PLGQIQLTIR…ELAKGWTQWY (123 aa)). The interval 757–764 (KRRSGRRK) is required for phosphatidylinositol 4,5-bisphosphate-dependent location at the cell membrane.

The protein belongs to the extended synaptotagmin family. In terms of assembly, homodimer. Interacts with ESYT1 and ESYT3. Interacts with FGFR1 that has been activated by FGF1 binding. Interacts with the AP-2 complex; identified in a complex with the AP-2 complex and FGFR1.

The protein localises to the cell membrane. It is found in the endoplasmic reticulum membrane. Tethers the endoplasmic reticulum to the cell membrane and promotes the formation of appositions between the endoplasmic reticulum and the cell membrane. Binds glycerophospholipids in a barrel-like domain and may play a role in cellular lipid transport. Plays a role in FGF signaling via its role in the rapid internalization of FGFR1 that has been activated by FGF1 binding; this occurs most likely via the AP-2 complex. Promotes the localization of SACM1L at endoplasmic reticulum-plasma membrane contact sites (EPCS). This is Extended synaptotagmin-2 (Esyt2) from Mus musculus (Mouse).